The sequence spans 71 residues: Translation initiation factor IF-1 (71 aa).

Residues 1–71 (MSKDDLIQFT…LTKGRVIHRH (71 aa)) enclose the S1-like domain.

This sequence belongs to the IF-1 family. In terms of assembly, component of the 30S ribosomal translation pre-initiation complex which assembles on the 30S ribosome in the order IF-2 and IF-3, IF-1 and N-formylmethionyl-tRNA(fMet); mRNA recruitment can occur at any time during PIC assembly.

Its subcellular location is the cytoplasm. In terms of biological role, one of the essential components for the initiation of protein synthesis. Stabilizes the binding of IF-2 and IF-3 on the 30S subunit to which N-formylmethionyl-tRNA(fMet) subsequently binds. Helps modulate mRNA selection, yielding the 30S pre-initiation complex (PIC). Upon addition of the 50S ribosomal subunit IF-1, IF-2 and IF-3 are released leaving the mature 70S translation initiation complex. The sequence is that of Translation initiation factor IF-1 from Rickettsia typhi (strain ATCC VR-144 / Wilmington).